Here is a 211-residue protein sequence, read N- to C-terminus: Probable nicotinate-nucleotide adenylyltransferase (211 aa).

This sequence belongs to the NadD family.

The enzyme catalyses nicotinate beta-D-ribonucleotide + ATP + H(+) = deamido-NAD(+) + diphosphate. It functions in the pathway cofactor biosynthesis; NAD(+) biosynthesis; deamido-NAD(+) from nicotinate D-ribonucleotide: step 1/1. Functionally, catalyzes the reversible adenylation of nicotinate mononucleotide (NaMN) to nicotinic acid adenine dinucleotide (NaAD). The chain is Probable nicotinate-nucleotide adenylyltransferase from Corynebacterium kroppenstedtii (strain DSM 44385 / JCM 11950 / CIP 105744 / CCUG 35717).